Here is a 424-residue protein sequence, read N- to C-terminus: Neurotensin receptor type 1 (424 aa).

Topologically, residues 1–67 are extracellular; that stretch reads MHLNSSVQQG…TDIYSKVLVT (67 aa). 3 N-linked (GlcNAc...) asparagine glycosylation sites follow: N4, N38, and N42. The helical transmembrane segment at 68-88 threads the bilayer; it reads AVYLALFVVGTVGNSVTAFTL. The Cytoplasmic segment spans residues 89–102; that stretch reads ARKKSLQSLQSTVH. Residues 103–122 traverse the membrane as a helical segment; it reads YHLGSLALSDLLILLLAMPV. Residues 123-142 are Extracellular-facing; the sequence is ELYNFIWVHHPWAFGDAGCR. The cysteines at positions 141 and 224 are disulfide-linked. Residues 143 to 164 traverse the membrane as a helical segment; the sequence is GYYFLRDACTYATALNVASLSV. Residues 165–184 are Cytoplasmic-facing; it reads ERYLAICHPFKAKTLMSRSR. Residues 185 to 205 form a helical membrane-spanning segment; it reads TKKFISAIWLASALLAVPMLF. Topologically, residues 206-234 are extracellular; the sequence is TMGLQNRSADGQHPGGLVCTPTVDTATVK. N211 is a glycosylation site (N-linked (GlcNAc...) asparagine). Residues 235 to 259 form a helical membrane-spanning segment; it reads VVIQVNTFMSFLFPMLIISILNTVI. At 260–308 the chain is on the cytoplasmic side; sequence ANKLTVMVHQAAEQGRGVCTVGTHNSLEHSTFNMSIEPGRVQALRHGVL. A helical transmembrane segment spans residues 309 to 330; the sequence is VLRAVVIAFVVCWLPYHVRRLM. The tract at residues 326-349 is neurotensin binding; that stretch reads VRRLMFCYISDEQWTTFLFDFYHY. Topologically, residues 331–348 are extracellular; that stretch reads FCYISDEQWTTFLFDFYH. Residues 349–369 form a helical membrane-spanning segment; that stretch reads YFYMLTNALFYVSSAINPILY. Over 370–424 the chain is Cytoplasmic; it reads NLVSANFRQVFLSTLACLCPGWRRRRKKRPTFSRKPNSMSSNHAFSTSATRETLY. 2 S-palmitoyl cysteine lipidation sites follow: C386 and C388. A disordered region spans residues 398-424; sequence RPTFSRKPNSMSSNHAFSTSATRETLY. A compositionally biased stretch (polar residues) spans 403 to 424; that stretch reads RKPNSMSSNHAFSTSATRETLY.

It belongs to the G-protein coupled receptor 1 family. Neurotensin receptor subfamily. NTSR1 sub-subfamily. Interacts (palmitoylated form) with GNA11. In terms of processing, N-glycosylated. Post-translationally, palmitoylated; this is required for normal localization at membrane rafts and normal GNA11-mediated activation of down-stream signaling cascades. The palmitoylation level increases in response to neurotensin treatment.

It is found in the cell membrane. Its subcellular location is the membrane raft. G-protein coupled receptor for the tridecapeptide neurotensin (NTS). Signaling is effected via G proteins that activate a phosphatidylinositol-calcium second messenger system. Signaling leads to the activation of downstream MAP kinases and protects cells against apoptosis. This chain is Neurotensin receptor type 1 (Ntsr1), found in Mus musculus (Mouse).